Reading from the N-terminus, the 424-residue chain is Histidine--tRNA ligase (424 aa).

This sequence belongs to the class-II aminoacyl-tRNA synthetase family. Homodimer.

The protein localises to the cytoplasm. It catalyses the reaction tRNA(His) + L-histidine + ATP = L-histidyl-tRNA(His) + AMP + diphosphate + H(+). The polypeptide is Histidine--tRNA ligase (Staphylococcus epidermidis (strain ATCC 12228 / FDA PCI 1200)).